Consider the following 196-residue polypeptide: Recombination protein RecR (196 aa).

Residues 57–72 (CERCHTFTEGAVCETC) form a C4-type zinc finger. Residues 80-175 (TRLCVVETPA…HVTRLARGVP (96 aa)) form the Toprim domain.

The protein belongs to the RecR family.

In terms of biological role, may play a role in DNA repair. It seems to be involved in an RecBC-independent recombinational process of DNA repair. It may act with RecF and RecO. The polypeptide is Recombination protein RecR (Acidovorax sp. (strain JS42)).